The chain runs to 344 residues: Isopentenyl-diphosphate delta-isomerase (344 aa).

Residue 9–10 (RK) participates in substrate binding. Residues 65–67 (AMT), Ser95, and Asn124 contribute to the FMN site. Residue Gln154 participates in substrate binding. Residue Glu155 coordinates Mg(2+). Residues Lys185, Thr215, 259–261 (GVR), and 280–281 (SG) contribute to the FMN site.

This sequence belongs to the IPP isomerase type 2 family. In terms of assembly, homooctamer. Dimer of tetramers. FMN is required as a cofactor. The cofactor is NADPH. Mg(2+) serves as cofactor.

It is found in the cytoplasm. The enzyme catalyses isopentenyl diphosphate = dimethylallyl diphosphate. In terms of biological role, involved in the biosynthesis of isoprenoids. Catalyzes the 1,3-allylic rearrangement of the homoallylic substrate isopentenyl (IPP) to its allylic isomer, dimethylallyl diphosphate (DMAPP). This chain is Isopentenyl-diphosphate delta-isomerase, found in Lacticaseibacillus paracasei (strain ATCC 334 / BCRC 17002 / CCUG 31169 / CIP 107868 / KCTC 3260 / NRRL B-441) (Lactobacillus paracasei).